We begin with the raw amino-acid sequence, 399 residues long: Phosphoglycerate kinase (399 aa).

Residues 22 to 24, Arg-38, 61 to 64, Arg-120, and Arg-153 each bind substrate; these read DFN and HLGR. ATP contacts are provided by residues Lys-204, Glu-326, and 352–355; that span reads GGDT.

It belongs to the phosphoglycerate kinase family. In terms of assembly, monomer.

Its subcellular location is the cytoplasm. The enzyme catalyses (2R)-3-phosphoglycerate + ATP = (2R)-3-phospho-glyceroyl phosphate + ADP. It functions in the pathway carbohydrate degradation; glycolysis; pyruvate from D-glyceraldehyde 3-phosphate: step 2/5. This Geobacter sp. (strain M21) protein is Phosphoglycerate kinase.